A 533-amino-acid polypeptide reads, in one-letter code: MEKGTRQRNNTAKNHPDRGSDTSPEAEASSGGGGVALKKEIGLVSACGIIVGNIIGSGIFVSPKGVLENAGSVGLALIVWIVTGVITAVGALCYAELGVTIPKSGGDYSYVKDIFGGLAGFLRLWIAVLVIYPTNQAVIALTFSNYVLQPLFPTCFPPESGLRLLAAICLLLLTWVNCSSVRWATRVQDIFTAGKLLALALIIIMGVVQICKGEFFWLEPKNAFENFQEPDIGLVALAFLQGSFAYGGWNFLNYVTEELVDPYKNLPRAIFISIPLVTFVYVFANIAYVTAMSPQELLASNAVAVTFGEKLLGVMAWIMPISVALSTFGGVNGSLFTSSRLFFAGAREGHLPSVLAMIHVKRCTPIPALLFTCLSTLLMLVTSDMYTLINYVGFINYLFYGVTVAGQIVLRWKKPDIPRPIKISLLFPIIYLLFWAFLLIFSLWSEPVVCGIGLAIMLTGVPVYFLGVYWQHKPKCFNDFIESLTLVSQKMCVVVYPQEGDSGTEETIDDVEEQHKPIFQPTPVKDPDSEEQP.

Residues 1–33 form a disordered region; that stretch reads MEKGTRQRNNTAKNHPDRGSDTSPEAEASSGGG. The Cytoplasmic segment spans residues 1-45; that stretch reads MEKGTRQRNNTAKNHPDRGSDTSPEAEASSGGGGVALKKEIGLVS. 4 positions are modified to phosphoserine: Ser-20, Ser-23, Ser-29, and Ser-30. Residues 46–66 traverse the membrane as a helical segment; sequence ACGIIVGNIIGSGIFVSPKGV. Ile-54 contributes to the L-leucine binding site. Residues 67–74 lie on the Extracellular side of the membrane; sequence LENAGSVG. The helical transmembrane segment at 75–96 threads the bilayer; that stretch reads LALIVWIVTGVITAVGALCYAE. The Cytoplasmic segment spans residues 97 to 117; it reads LGVTIPKSGGDYSYVKDIFGG. A helical transmembrane segment spans residues 118 to 150; the sequence is LAGFLRLWIAVLVIYPTNQAVIALTFSNYVLQP. Residue Asn-135 participates in L-tryptophan binding. Residues 151–158 lie on the Extracellular side of the membrane; sequence LFPTCFPP. The chain crosses the membrane as a helical span at residues 159-179; sequence ESGLRLLAAICLLLLTWVNCS. Over 180 to 182 the chain is Cytoplasmic; it reads SVR. Residues 183-211 traverse the membrane as a helical segment; that stretch reads WATRVQDIFTAGKLLALALIIIMGVVQIC. Over 212–231 the chain is Extracellular; the sequence is KGEFFWLEPKNAFENFQEPD. A helical membrane pass occupies residues 232–253; it reads IGLVALAFLQGSFAYGGWNFLN. Gly-247 is an L-leucine binding site. The Cytoplasmic segment spans residues 254–266; it reads YVTEELVDPYKNL. Residues 267 to 288 form a helical membrane-spanning segment; that stretch reads PRAIFISIPLVTFVYVFANIAY. The Extracellular segment spans residues 289–313; the sequence is VTAMSPQELLASNAVAVTFGEKLLG. The chain crosses the membrane as a helical span at residues 314–339; the sequence is VMAWIMPISVALSTFGGVNGSLFTSS. The Cytoplasmic segment spans residues 340 to 365; sequence RLFFAGAREGHLPSVLAMIHVKRCTP. Residues 366 to 383 traverse the membrane as a helical segment; sequence IPALLFTCLSTLLMLVTS. Over 384–387 the chain is Extracellular; sequence DMYT. Residues 388–409 form a helical membrane-spanning segment; that stretch reads LINYVGFINYLFYGVTVAGQIV. Asn-396 is a binding site for L-tryptophan. Over 410–424 the chain is Cytoplasmic; it reads LRWKKPDIPRPIKIS. Helical transmembrane passes span 425-447 and 448-467; these read LLFP…WSEP and VVCG…YFLG. Topologically, residues 468–533 are cytoplasmic; sequence VYWQHKPKCF…VKDPDSEEQP (66 aa). The tract at residues 500 to 533 is disordered; sequence GDSGTEETIDDVEEQHKPIFQPTPVKDPDSEEQP. The segment covering 502 to 512 has biased composition (acidic residues); sequence SGTEETIDDVE. Ser-529 is modified (phosphoserine).

The protein belongs to the amino acid-polyamine-organocation (APC) superfamily. L-type amino acid transporter (LAT) (TC 2.A.3.8) family. In terms of assembly, disulfide-linked heterodimer composed of the catalytic light chain subunit SLC7A8 and the heavy chain subunit SLC3A2. SLC3A2 acts as a chaperone for correct plasma membrane trafficking and stabilization of SLC7A8 and modulates the substrate affinity and specificity of SLC7A8. ICAM-1 associates with the heterodimer SLC3A2/SLC7A8; facilitates leucine uptake. In terms of tissue distribution, expression is seen in jejunum mucosa and the epithelial cells of the jejunum, ileum and colon, as well as in kidney, placenta, brain, testis and skeletal muscle. Expressed in retina, inner blood-retinal barrier of retina, retinal vascular endothelial cells. Also expressed in the intestinal epithelial cell line IEC-6 and in the retinal capillary endothelial cell line TR-iBRB2.

It is found in the cell membrane. It localises to the basolateral cell membrane. The catalysed reaction is L-dopa(out) + L-phenylalanine(in) = L-dopa(in) + L-phenylalanine(out). It carries out the reaction 3,3'-diiodo-L-thyronine(out) = 3,3'-diiodo-L-thyronine(in). The enzyme catalyses L-histidine(in) + L-phenylalanine(out) = L-histidine(out) + L-phenylalanine(in). It catalyses the reaction L-tryptophan(in) + L-phenylalanine(out) = L-tryptophan(out) + L-phenylalanine(in). The catalysed reaction is L-isoleucine(in) + L-phenylalanine(out) = L-isoleucine(out) + L-phenylalanine(in). It carries out the reaction L-valine(in) + L-phenylalanine(out) = L-valine(out) + L-phenylalanine(in). The enzyme catalyses L-leucine(in) + L-phenylalanine(out) = L-leucine(out) + L-phenylalanine(in). It catalyses the reaction L-glutamine(in) + L-phenylalanine(out) = L-glutamine(out) + L-phenylalanine(in). The catalysed reaction is L-cysteine(in) + L-phenylalanine(out) = L-cysteine(out) + L-phenylalanine(in). It carries out the reaction L-phenylalanine(out) + L-methionine(in) = L-phenylalanine(in) + L-methionine(out). The enzyme catalyses L-leucine(out) + L-methionine(in) = L-leucine(in) + L-methionine(out). It catalyses the reaction L-cysteine(out) + L-methionine(in) = L-cysteine(in) + L-methionine(out). The catalysed reaction is S-methylmercury-L-cysteine(out) + L-methionine(in) = S-methylmercury-L-cysteine(in) + L-methionine(out). It carries out the reaction S-methylmercury-L-cysteine(in) + L-leucine(out) = S-methylmercury-L-cysteine(out) + L-leucine(in). The enzyme catalyses S-methylmercury-L-cysteine(in) + L-phenylalanine(out) = S-methylmercury-L-cysteine(out) + L-phenylalanine(in). It catalyses the reaction L-phenylalanine(out) + L-serine(in) = L-phenylalanine(in) + L-serine(out). The catalysed reaction is L-phenylalanine(out) + glycine(in) = L-phenylalanine(in) + glycine(out). It carries out the reaction L-phenylalanine(out) + L-alanine(in) = L-phenylalanine(in) + L-alanine(out). The enzyme catalyses 3,3',5-triiodo-L-thyronine(out) = 3,3',5-triiodo-L-thyronine(in). With respect to regulation, leucine transport activity is inhibited by 2-amino-bicyclo-(2,2,1)-heptane-2-carboxylate (BCH), glycine, L-isomers of the neutral amino acids and histidine. Associates with SLC3A2 to form a functional heterodimeric complex that translocates small and large neutral amino acids with broad specificity and a stoichiometry of 1:1. Functions as amino acid antiporter mediating the influx of extracellular essential amino acids mainly in exchange with the efflux of highly concentrated intracellular amino acids. Has relatively symmetrical selectivities but strongly asymmetrical substrate affinities at both the intracellular and extracellular sides of the transporter. This asymmetry allows SLC7A8 to regulate intracellular amino acid pools (mM concentrations) by exchange with external amino acids (uM concentration range), equilibrating the relative concentrations of different amino acids across the plasma membrane instead of mediating their net uptake. May play an essential role in the reabsorption of neutral amino acids from the epithelial cells to the bloodstream in the kidney. Involved in the uptake of methylmercury (MeHg) when administered as the L-cysteine or D,L-homocysteine complexes, and hence plays a role in metal ion homeostasis and toxicity. Involved in the cellular activity of small molecular weight nitrosothiols, via the stereoselective transport of L-nitrosocysteine (L-CNSO) across the transmembrane. Imports the thyroid hormone diiodothyronine (T2) and to a smaller extent triiodothyronine (T3) but not rT 3 or thyroxine (T4). Mediates the uptake of L-DOPA. May participate in auditory function. This chain is Large neutral amino acids transporter small subunit 2 (Slc7a8), found in Rattus norvegicus (Rat).